The chain runs to 160 residues: Invasion protein IagB (160 aa).

A signal peptide spans 1-19; it reads MHYFFIIVIWLLSINTAWA.

Belongs to the IagB/IpgF/P19 family.

This chain is Invasion protein IagB (iagB), found in Salmonella typhi.